A 122-amino-acid chain; its full sequence is NADH-ubiquinone oxidoreductase chain 3 (122 aa).

A run of 3 helical transmembrane segments spans residues 12 to 32 (VLIF…LSYV), 66 to 86 (LVAI…PWAV), and 91 to 111 (VTIF…VGFI).

It belongs to the complex I subunit 3 family.

The protein resides in the mitochondrion membrane. It catalyses the reaction a ubiquinone + NADH + 5 H(+)(in) = a ubiquinol + NAD(+) + 4 H(+)(out). Functionally, core subunit of the mitochondrial membrane respiratory chain NADH dehydrogenase (Complex I) that is believed to belong to the minimal assembly required for catalysis. Complex I functions in the transfer of electrons from NADH to the respiratory chain. The immediate electron acceptor for the enzyme is believed to be ubiquinone. In Reclinomonas americana, this protein is NADH-ubiquinone oxidoreductase chain 3 (NAD3).